The chain runs to 203 residues: MSRLLRLGITGGIACGKSVVAGYLQRQYGVPIVDADVLARQVVAVGTPIYQAIVDRYGDGICRRDGTLDRSRLGEIVFAQPQERQWLEAQIHPAVVAEMEQAMATCDQPLMALVIPLLFEAHLEGLVDHIWVVATPPEQQLARLQQRDRLSAHAAGQRLASQLPLEEKIRRADTVLWNTGSLEELYRQVDQAFSLLGRGGKGG.

The region spanning 6-203 is the DPCK domain; it reads RLGITGGIAC…SLLGRGGKGG (198 aa). 14–19 contacts ATP; that stretch reads ACGKSV.

This sequence belongs to the CoaE family.

It localises to the cytoplasm. It carries out the reaction 3'-dephospho-CoA + ATP = ADP + CoA + H(+). The protein operates within cofactor biosynthesis; coenzyme A biosynthesis; CoA from (R)-pantothenate: step 5/5. Functionally, catalyzes the phosphorylation of the 3'-hydroxyl group of dephosphocoenzyme A to form coenzyme A. In Thermosynechococcus vestitus (strain NIES-2133 / IAM M-273 / BP-1), this protein is Dephospho-CoA kinase.